A 519-amino-acid polypeptide reads, in one-letter code: Acetylcholine receptor subunit gamma (519 aa).

The N-terminal stretch at 1–22 (MCGGQRPLFLLPLLAVCLGAKG) is a signal peptide. Residues 23 to 240 (RNQEERLLGD…VVFYLLIQRK (218 aa)) lie on the Extracellular side of the membrane. N-linked (GlcNAc...) asparagine glycosylation is found at Asn52 and Asn163. A disulfide bridge connects residues Cys150 and Cys164. A run of 3 helical transmembrane segments spans residues 241–265 (PLFY…IYFL), 274–292 (CTVA…FLVA), and 308–329 (YLTF…VLNV). The Cytoplasmic segment spans residues 330 to 476 (SLRSPHTHSM…WFLVGRVLDR (147 aa)). A helical membrane pass occupies residues 477 to 497 (VCFLAMLSLFVCGTAGIFLMA).

This sequence belongs to the ligand-gated ion channel (TC 1.A.9) family. Acetylcholine receptor (TC 1.A.9.1) subfamily. Gamma/CHRNG sub-subfamily. Pentamer of two alpha chains, and one each of the beta, delta, and gamma (in immature muscle) or epsilon (in mature muscle) chains.

It localises to the postsynaptic cell membrane. Its subcellular location is the cell membrane. It catalyses the reaction K(+)(in) = K(+)(out). The enzyme catalyses Na(+)(in) = Na(+)(out). After binding acetylcholine, the AChR responds by an extensive change in conformation that affects all subunits and leads to opening of an ion-conducting channel across the plasma membrane. In Bos taurus (Bovine), this protein is Acetylcholine receptor subunit gamma (CHRNG).